Reading from the N-terminus, the 737-residue chain is Photosystem I P700 chlorophyll a apoprotein A2 (737 aa).

The next 8 helical transmembrane spans lie at 46–69 (LFSTHFGHLAIIGLWVSGNLFHIA), 135–158 (LYQGSIFMMILSAWALFAGWLHLQ), 175–199 (LNHHLAVLFGFSSIAWTGHLVHVAI), 273–291 (IAHHHLAIGCIFVIAGHMY), 333–356 (LHFQLGLALASLGVVTSLVAQHMY), 372–398 (AALYTHHQYIAIALMCGAFAHGAIFFI), 420–442 (AIISHLSWVSLFLGFHTLGLYVH), and 520–538 (FLVHHAIALGLHTTTLILV). 2 residues coordinate [4Fe-4S] cluster: C562 and C571. 2 consecutive transmembrane segments (helical) span residues 578–599 (AFYLAVFWALNTVGWLTFYWHW) and 646–668 (LAVWAWMFLFGHLVWATGFMFLI). Chlorophyll a-binding residues include H657, M665, and Y673. Phylloquinone is bound at residue W674. Residues 710-730 (VVGLAHFTVGYVLTYAAFLIA) traverse the membrane as a helical segment.

The protein belongs to the PsaA/PsaB family. As to quaternary structure, the PsaA/B heterodimer binds the P700 chlorophyll special pair and subsequent electron acceptors. PSI consists of a core antenna complex that captures photons, and an electron transfer chain that converts photonic excitation into a charge separation. The cyanobacterial PSI reaction center is composed of one copy each of PsaA,B,C,D,E,F,I,J,K,L,M and X, and forms trimeric complexes. It depends on PSI electron transfer chain: 5 chlorophyll a, 1 chlorophyll a', 2 phylloquinones and 3 4Fe-4S clusters. PSI core antenna: 90 chlorophyll a, 22 carotenoids, 3 phospholipids and 1 galactolipid. P700 is a chlorophyll a/chlorophyll a' dimer, A0 is one or more chlorophyll a, A1 is one or both phylloquinones and FX is a shared 4Fe-4S iron-sulfur center. as a cofactor.

The protein localises to the cellular thylakoid membrane. It catalyses the reaction reduced [plastocyanin] + hnu + oxidized [2Fe-2S]-[ferredoxin] = oxidized [plastocyanin] + reduced [2Fe-2S]-[ferredoxin]. In terms of biological role, psaA and PsaB bind P700, the primary electron donor of photosystem I (PSI), as well as the electron acceptors A0, A1 and FX. PSI is a plastocyanin/cytochrome c6-ferredoxin oxidoreductase, converting photonic excitation into a charge separation, which transfers an electron from the donor P700 chlorophyll pair to the spectroscopically characterized acceptors A0, A1, FX, FA and FB in turn. Oxidized P700 is reduced on the lumenal side of the thylakoid membrane by plastocyanin or cytochrome c6. This is Photosystem I P700 chlorophyll a apoprotein A2 from Synechococcus sp. (strain CC9605).